The primary structure comprises 175 residues: Alkyl hydroperoxide reductase AhpD (175 aa).

Cys131 (proton donor) is an active-site residue. Cys131 and Cys134 are disulfide-bonded. Cys134 (cysteine sulfenic acid (-SOH) intermediate) is an active-site residue.

This sequence belongs to the AhpD family.

It catalyses the reaction N(6)-[(R)-dihydrolipoyl]-L-lysyl-[lipoyl-carrier protein] + a hydroperoxide = N(6)-[(R)-lipoyl]-L-lysyl-[lipoyl-carrier protein] + an alcohol + H2O. Functionally, antioxidant protein with alkyl hydroperoxidase activity. Required for the reduction of the AhpC active site cysteine residues and for the regeneration of the AhpC enzyme activity. The polypeptide is Alkyl hydroperoxide reductase AhpD (Brucella canis (strain ATCC 23365 / NCTC 10854 / RM-666)).